Consider the following 89-residue polypeptide: UPF0473 protein Helmi_02360 (89 aa).

Belongs to the UPF0473 family.

The protein is UPF0473 protein Helmi_02360 of Heliobacterium modesticaldum (strain ATCC 51547 / Ice1).